We begin with the raw amino-acid sequence, 76 residues long: MNKALFLCLVVLCAAVVFAAEDLQKAKHAPFKRATACFCPGKADRGDLWILRGDCPDGYGYTTYCYKGPNICCYPH.

Residues 1–19 (MNKALFLCLVVLCAAVVFA) form the signal peptide. Residues 20–31 (AEDLQKAKHAPF) constitute a propeptide that is removed on maturation. 3 cysteine pairs are disulfide-bonded: Cys-37–Cys-72, Cys-39–Cys-65, and Cys-55–Cys-73.

It belongs to the sea anemone type 3 (BDS) potassium channel toxin family. As to expression, weakly expressed in the ectodermal tissue from the distal and proximal tentacles, body wall, and oral disk.

Its subcellular location is the secreted. The protein resides in the nematocyst. Blocks Kv3 voltage-gated potassium channels. Reduces blood pressure. This chain is Kappa-actitoxin-Avd4m, found in Anemonia viridis (Snakelocks anemone).